We begin with the raw amino-acid sequence, 60 residues long: Large ribosomal subunit protein bL32 (60 aa).

Residues 1 to 16 (MPNPKRRHSKKRTSTR) show a composition bias toward basic residues. The tract at residues 1 to 28 (MPNPKRRHSKKRTSTRRAHDALKQPGLS) is disordered.

It belongs to the bacterial ribosomal protein bL32 family.

This is Large ribosomal subunit protein bL32 from Solibacter usitatus (strain Ellin6076).